A 285-amino-acid chain; its full sequence is Nucleotide-binding protein Pnap_0906 (285 aa).

An ATP-binding site is contributed by 8-15 (GMSGSGKS). 57–60 (DVRS) contacts GTP.

This sequence belongs to the RapZ-like family.

Functionally, displays ATPase and GTPase activities. This Polaromonas naphthalenivorans (strain CJ2) protein is Nucleotide-binding protein Pnap_0906.